Reading from the N-terminus, the 171-residue chain is uncharacterized protein (171 aa).

This is an uncharacterized protein from Ureaplasma parvum serovar 3 (strain ATCC 700970).